The primary structure comprises 244 residues: tRNA (guanine-N(7)-)-methyltransferase (244 aa).

A disordered region spans residues 1-20 (MTNPFDSAGSKAPPKPFTVS). E75, E100, D127, and D150 together coordinate S-adenosyl-L-methionine. The active site involves D150. K154 serves as a coordination point for substrate. The tract at residues 156-161 (RHNKRR) is interaction with RNA. Substrate is bound by residues D186 and 223 to 226 (THFE).

It belongs to the class I-like SAM-binding methyltransferase superfamily. TrmB family.

It catalyses the reaction guanosine(46) in tRNA + S-adenosyl-L-methionine = N(7)-methylguanosine(46) in tRNA + S-adenosyl-L-homocysteine. It functions in the pathway tRNA modification; N(7)-methylguanine-tRNA biosynthesis. Functionally, catalyzes the formation of N(7)-methylguanine at position 46 (m7G46) in tRNA. The chain is tRNA (guanine-N(7)-)-methyltransferase from Stenotrophomonas maltophilia (strain K279a).